We begin with the raw amino-acid sequence, 117 residues long: Large ribosomal subunit protein bL17 (117 aa).

It belongs to the bacterial ribosomal protein bL17 family. As to quaternary structure, part of the 50S ribosomal subunit. Contacts protein L32.

The sequence is that of Large ribosomal subunit protein bL17 from Campylobacter jejuni subsp. jejuni serotype O:6 (strain 81116 / NCTC 11828).